Reading from the N-terminus, the 269-residue chain is Hydroxyethylthiazole kinase (269 aa).

Residue methionine 42 participates in substrate binding. Residues arginine 118 and serine 164 each contribute to the ATP site. Glycine 191 serves as a coordination point for substrate.

The protein belongs to the Thz kinase family. It depends on Mg(2+) as a cofactor.

The catalysed reaction is 5-(2-hydroxyethyl)-4-methylthiazole + ATP = 4-methyl-5-(2-phosphooxyethyl)-thiazole + ADP + H(+). Its pathway is cofactor biosynthesis; thiamine diphosphate biosynthesis; 4-methyl-5-(2-phosphoethyl)-thiazole from 5-(2-hydroxyethyl)-4-methylthiazole: step 1/1. Its function is as follows. Catalyzes the phosphorylation of the hydroxyl group of 4-methyl-5-beta-hydroxyethylthiazole (THZ). This chain is Hydroxyethylthiazole kinase, found in Listeria welshimeri serovar 6b (strain ATCC 35897 / DSM 20650 / CCUG 15529 / CIP 8149 / NCTC 11857 / SLCC 5334 / V8).